We begin with the raw amino-acid sequence, 141 residues long: Nucleoside triphosphatase NudI (141 aa).

The 141-residue stretch at methionine 1–leucine 141 folds into the Nudix hydrolase domain. Residues glycine 38–glycine 59 carry the Nudix box motif.

The protein belongs to the Nudix hydrolase family. NudI subfamily. Monomer. It depends on Mg(2+) as a cofactor.

It catalyses the reaction a ribonucleoside 5'-triphosphate + H2O = a ribonucleoside 5'-phosphate + diphosphate + H(+). The catalysed reaction is a 2'-deoxyribonucleoside 5'-triphosphate + H2O = a 2'-deoxyribonucleoside 5'-phosphate + diphosphate + H(+). The enzyme catalyses dUTP + H2O = dUMP + diphosphate + H(+). It carries out the reaction dTTP + H2O = dTMP + diphosphate + H(+). It catalyses the reaction dCTP + H2O = dCMP + diphosphate + H(+). Its function is as follows. Catalyzes the hydrolysis of nucleoside triphosphates, with a preference for pyrimidine deoxynucleoside triphosphates (dUTP, dTTP and dCTP). In Shigella flexneri serotype 5b (strain 8401), this protein is Nucleoside triphosphatase NudI.